Reading from the N-terminus, the 474-residue chain is Pyoverdine export outer membrane protein OpmQ (474 aa).

The signal sequence occupies residues 1 to 17 (MSMKNLSLISACLLLGA). A lipid anchor (N-palmitoyl cysteine) is attached at Cys18. A lipid anchor (S-diacylglycerol cysteine) is attached at Cys18.

It belongs to the outer membrane factor (OMF) (TC 1.B.17) family. As to quaternary structure, part of the tripartite efflux system PvdRT-OpmQ, which is composed of an inner membrane component with both ATPase and permease domains, PvdT, a periplasmic membrane fusion protein, PvdR, and an outer membrane component, OpmQ.

Its subcellular location is the cell outer membrane. In terms of biological role, part of the tripartite efflux system PvdRT-OpmQ required for the secretion into the extracellular milieu of the siderophore pyoverdine (PVD), which is involved in iron acquisition. The system is responsible for export of newly synthesized PVD after the final steps of biosynthesis have taken place in the periplasm. It is also responsible for recycling of PVD after internalization of ferri-PVD into the periplasm by the outer-membrane receptor FpvA and release of iron from PVD, thus making PVD available for new cycles of iron uptake. In addition, can expel unwanted metals complexed with PVD from the periplasm into the extracellular medium. The sequence is that of Pyoverdine export outer membrane protein OpmQ from Pseudomonas aeruginosa (strain ATCC 15692 / DSM 22644 / CIP 104116 / JCM 14847 / LMG 12228 / 1C / PRS 101 / PAO1).